A 229-amino-acid chain; its full sequence is Ribonuclease 3 (229 aa).

Residues 5–134 (EQKLEQDFGI…FLGALYLDQG (130 aa)) form the RNase III domain. E47 serves as a coordination point for Mg(2+). D51 is a catalytic residue. D120 and E123 together coordinate Mg(2+). E123 is a catalytic residue. Positions 160–229 (DYKTALQERL…AKSALEQLGN (70 aa)) constitute a DRBM domain.

It belongs to the ribonuclease III family. Homodimer. Requires Mg(2+) as cofactor.

The protein localises to the cytoplasm. The enzyme catalyses Endonucleolytic cleavage to 5'-phosphomonoester.. In terms of biological role, digests double-stranded RNA. Involved in the processing of primary rRNA transcript to yield the immediate precursors to the large and small rRNAs (23S and 16S). Also processes some mRNAs, and tRNAs when they are encoded in the rRNA operon. CRISPR (clustered regularly interspaced short palindromic repeat) is an adaptive immune system that provides protection against mobile genetic elements (viruses, transposable elements and conjugative plasmids). CRISPR clusters contain spacers, sequences complementary to antecedent mobile elements, and target invading nucleic acids. CRISPR clusters are transcribed and processed into CRISPR RNA (crRNA). In this organism endogenous ribonuclease 3 and Cas9 are required for correct coprocessing of pre-crRNA and the trans-encoded small RNA (tracrRNA). Cas9, crRNA and tracrRNA are required for cleavage of invading DNA. Complements pre-crRNA and tracRNA coprocessing defects in an rnc deletion in S.pyogenes strain 370. This is Ribonuclease 3 from Streptococcus thermophilus (strain ATCC BAA-491 / LMD-9).